We begin with the raw amino-acid sequence, 36 residues long: MLTIYIMLNNYKSVILSPFPCCVLKSYLTVIYISFL.

A helical transmembrane segment spans residues 13-35 (SVILSPFPCCVLKSYLTVIYISF).

The protein localises to the host membrane. This is an uncharacterized protein from Pseudoalteromonas espejiana (Bacteriophage PM2).